The following is a 202-amino-acid chain: MIVVIDYGVGNIASVLNMLKRVGAKAKASDSREDIEQAEKLILPGVGAFDAGMQTLRKSGLVDVLTEQVMIKRKPVMGVCLGSQMLGLRSEEGAEPGLGWIDMDSVRFERRDDRKVPHMGWNQVSPQLEHPILSGINEQSRFYFVHSYYMVPKDPDDILLSCNYGQKFTAAVARDNVFGFQFHPEKSHKFGMQLFKNFVELV.

Residues 1–202 (MIVVIDYGVG…QLFKNFVELV (202 aa)) enclose the Glutamine amidotransferase type-1 domain. Cys-80 functions as the Nucleophile in the catalytic mechanism. Active-site residues include His-183 and Glu-185.

As to quaternary structure, heterodimer of HisH and HisF.

It is found in the cytoplasm. It carries out the reaction 5-[(5-phospho-1-deoxy-D-ribulos-1-ylimino)methylamino]-1-(5-phospho-beta-D-ribosyl)imidazole-4-carboxamide + L-glutamine = D-erythro-1-(imidazol-4-yl)glycerol 3-phosphate + 5-amino-1-(5-phospho-beta-D-ribosyl)imidazole-4-carboxamide + L-glutamate + H(+). It catalyses the reaction L-glutamine + H2O = L-glutamate + NH4(+). It functions in the pathway amino-acid biosynthesis; L-histidine biosynthesis; L-histidine from 5-phospho-alpha-D-ribose 1-diphosphate: step 5/9. Functionally, IGPS catalyzes the conversion of PRFAR and glutamine to IGP, AICAR and glutamate. The HisH subunit catalyzes the hydrolysis of glutamine to glutamate and ammonia as part of the synthesis of IGP and AICAR. The resulting ammonia molecule is channeled to the active site of HisF. The protein is Imidazole glycerol phosphate synthase subunit HisH 2 (hisH2) of Pseudomonas aeruginosa (strain ATCC 15692 / DSM 22644 / CIP 104116 / JCM 14847 / LMG 12228 / 1C / PRS 101 / PAO1).